The chain runs to 312 residues: uncharacterized protein (312 aa).

10 helical membrane-spanning segments follow: residues 11–31 (IAAI…KIAL), 46–66 (IAFA…SIRV), 72–92 (ILPL…FGLV), 98–118 (EAGI…AYVL), 128–148 (GFTV…GVDV), 155–171 (GSLL…MYNT), 183–203 (TELT…IALV), 221–241 (PGFV…TSFL), 254–274 (MSAF…VILN), and 277–297 (LAWY…GSNI). EamA domains are found at residues 18-142 (FIIG…FIFV) and 164-297 (LSSA…GSNI).

Belongs to the EamA transporter family.

The protein resides in the cell membrane. This is an uncharacterized protein from Bacillus subtilis (strain 168).